The sequence spans 157 residues: Fimbrial protein Q (157 aa).

A propeptide spanning residues 1-6 is cleaved from the precursor; sequence MNAQKG. F7 carries the N-methylphenylalanine modification. A disulfide bond links C136 and C155.

It belongs to the N-Me-Phe pilin family. As to quaternary structure, the pili are polar flexible filaments of about 5.4 nanometers diameter and 2.5 micrometers average length; they consist of only a single polypeptide chain arranged in a helical configuration of five subunits per turn in the assembled pilus.

It localises to the fimbrium. The sequence is that of Fimbrial protein Q (tfpQ) from Moraxella bovis.